The sequence spans 242 residues: tRNA uridine(34) hydroxylase (242 aa).

In terms of domain architecture, Rhodanese spans 128-222; the sequence is DGREVVMLDT…YFEETGGPGY (95 aa). C182 serves as the catalytic Cysteine persulfide intermediate.

It belongs to the TrhO family.

The catalysed reaction is uridine(34) in tRNA + AH2 + O2 = 5-hydroxyuridine(34) in tRNA + A + H2O. Catalyzes oxygen-dependent 5-hydroxyuridine (ho5U) modification at position 34 in tRNAs. In Bordetella avium (strain 197N), this protein is tRNA uridine(34) hydroxylase.